A 295-amino-acid polypeptide reads, in one-letter code: Protease HtpX homolog (295 aa).

Transmembrane regions (helical) follow at residues 6-26 (IGLFLLTNILVVVTISIVTSV) and 40-60 (LSSLLVFCFLWGMGGAFVSLL). Residue H148 coordinates Zn(2+). The active site involves E149. H152 provides a ligand contact to Zn(2+). 2 helical membrane passes run 163-183 (LIQGVVNAFVMFFSRIISYAL) and 198-218 (IANIVLSILFSILGSIIVAYF). Residue E223 coordinates Zn(2+).

Belongs to the peptidase M48B family. It depends on Zn(2+) as a cofactor.

The protein localises to the cell inner membrane. The chain is Protease HtpX homolog from Leptospira interrogans serogroup Icterohaemorrhagiae serovar copenhageni (strain Fiocruz L1-130).